We begin with the raw amino-acid sequence, 505 residues long: 2-isopropylmalate synthase (505 aa).

Residues 5-267 form the Pyruvate carboxyltransferase domain; it reads VYIFDTTLRD…YTNIKTEEIY (263 aa). Mn(2+)-binding residues include Asp14, His202, His204, and Asn238. Positions 391-505 are regulatory domain; the sequence is TLEYLHISSG…VNKLIWDSQK (115 aa).

Belongs to the alpha-IPM synthase/homocitrate synthase family. LeuA type 1 subfamily. As to quaternary structure, homodimer. Mn(2+) is required as a cofactor.

Its subcellular location is the cytoplasm. The catalysed reaction is 3-methyl-2-oxobutanoate + acetyl-CoA + H2O = (2S)-2-isopropylmalate + CoA + H(+). Its pathway is amino-acid biosynthesis; L-leucine biosynthesis; L-leucine from 3-methyl-2-oxobutanoate: step 1/4. In terms of biological role, catalyzes the condensation of the acetyl group of acetyl-CoA with 3-methyl-2-oxobutanoate (2-ketoisovalerate) to form 3-carboxy-3-hydroxy-4-methylpentanoate (2-isopropylmalate). The chain is 2-isopropylmalate synthase from Pelotomaculum thermopropionicum (strain DSM 13744 / JCM 10971 / SI).